The following is a 481-amino-acid chain: Aromatic amino acid aminotransferase C1773.13 (481 aa).

Belongs to the class-I pyridoxal-phosphate-dependent aminotransferase family. It depends on pyridoxal 5'-phosphate as a cofactor.

The protein localises to the cytoplasm. It carries out the reaction an aromatic L-alpha-amino acid + 2-oxoglutarate = an aromatic oxo-acid + L-glutamate. In terms of biological role, has aromatic amino acid transaminase activity. The chain is Aromatic amino acid aminotransferase C1773.13 from Schizosaccharomyces pombe (strain 972 / ATCC 24843) (Fission yeast).